Reading from the N-terminus, the 212-residue chain is Ribosomal RNA small subunit methyltransferase G (212 aa).

S-adenosyl-L-methionine contacts are provided by residues G80, L85, 131–132, and R146; that span reads AE.

It belongs to the methyltransferase superfamily. RNA methyltransferase RsmG family.

It is found in the cytoplasm. It carries out the reaction guanosine(527) in 16S rRNA + S-adenosyl-L-methionine = N(7)-methylguanosine(527) in 16S rRNA + S-adenosyl-L-homocysteine. Its function is as follows. Specifically methylates the N7 position of guanine in position 527 of 16S rRNA. The protein is Ribosomal RNA small subunit methyltransferase G of Xylella fastidiosa (strain M23).